The primary structure comprises 101 residues: Small ribosomal subunit protein uS14 (101 aa).

It belongs to the universal ribosomal protein uS14 family. Part of the 30S ribosomal subunit. Contacts proteins S3 and S10.

Its function is as follows. Binds 16S rRNA, required for the assembly of 30S particles and may also be responsible for determining the conformation of the 16S rRNA at the A site. The sequence is that of Small ribosomal subunit protein uS14 from Neisseria meningitidis serogroup C / serotype 2a (strain ATCC 700532 / DSM 15464 / FAM18).